The following is a 226-amino-acid chain: MSKGPGLFADIGKYAKDLLTRDYSTDQKFSISTNSVSGVALTSTALKNGVLHAANVATQYKYRNTFFDVKIDTDFNVKSLVYPMNKFVSIDHNTLTGYDTTSRTFTKYNVGVSVTKPDQCVSIILGDKGDSIKASYVYYLDESTRSATVGEVIRKISTNETTVTVGGLYAVDHLTNVKAKLNSNGKFGALLQHEGLPKSIVTISGEIDTKTLDKYPRLGLSLSLKP.

This sequence belongs to the eukaryotic mitochondrial porin (TC 1.B.8.1) family.

It localises to the mitochondrion outer membrane. Functionally, putative channel that allows diffusion of small hydrophilic molecules through membranes. The protein is Putative mitochondrial outer membrane protein porin 5 (VDAC5) of Arabidopsis thaliana (Mouse-ear cress).